The sequence spans 995 residues: Polynucleotide 5'-hydroxyl-kinase NOL9 (995 aa).

Disordered stretches follow at residues 18–173 (EQRE…SSMK) and 271–359 (IKVF…YEPP). 2 stretches are compositionally biased toward low complexity: residues 75 to 94 (TAGA…SSPS) and 110 to 129 (VNKS…KSAK). Residues 279–354 (EETDSDEDDI…DIFDTDDLDS (76 aa)) are compositionally biased toward acidic residues. 639 to 646 (GGKGVGKS) provides a ligand contact to ATP.

It belongs to the Clp1 family. NOL9/GRC3 subfamily.

The protein resides in the nucleus. It localises to the nucleolus. Polynucleotide 5'-kinase involved in rRNA processing. The protein is Polynucleotide 5'-hydroxyl-kinase NOL9 of Drosophila melanogaster (Fruit fly).